Here is an 85-residue protein sequence, read N- to C-terminus: Probable oxaloacetate decarboxylase gamma chain (85 aa).

A helical transmembrane segment spans residues 11 to 33 (AAALMVTGMGVVFIFLTILIFLV).

Belongs to the OadG family. Heterotrimer of an alpha, a beta and a gamma subunit. Na(+) is required as a cofactor.

The protein resides in the cell membrane. It carries out the reaction oxaloacetate + 2 Na(+)(in) + H(+) = pyruvate + 2 Na(+)(out) + CO2. Its function is as follows. Catalyzes the decarboxylation of oxaloacetate coupled to Na(+) translocation. This Vibrio vulnificus (strain CMCP6) protein is Probable oxaloacetate decarboxylase gamma chain.